The following is a 203-amino-acid chain: Glycerol-3-phosphate acyltransferase (203 aa).

A run of 5 helical transmembrane segments spans residues 10 to 30 (MLIL…GLIL), 59 to 79 (GAAA…VLLA), 87 to 107 (AAQV…WLGF), 116 to 136 (FLGL…LSWL), and 160 to 180 (LVLL…LMVF).

It belongs to the PlsY family. In terms of assembly, probably interacts with PlsX.

Its subcellular location is the cell inner membrane. The enzyme catalyses an acyl phosphate + sn-glycerol 3-phosphate = a 1-acyl-sn-glycero-3-phosphate + phosphate. Its pathway is lipid metabolism; phospholipid metabolism. Functionally, catalyzes the transfer of an acyl group from acyl-phosphate (acyl-PO(4)) to glycerol-3-phosphate (G3P) to form lysophosphatidic acid (LPA). This enzyme utilizes acyl-phosphate as fatty acyl donor, but not acyl-CoA or acyl-ACP. This chain is Glycerol-3-phosphate acyltransferase, found in Ruegeria pomeroyi (strain ATCC 700808 / DSM 15171 / DSS-3) (Silicibacter pomeroyi).